We begin with the raw amino-acid sequence, 403 residues long: Basic leucine zipper 25 (403 aa).

Disordered regions lie at residues 13–128 (SFWP…APVV) and 156–259 (VKPE…EFDT). Residues 24 to 33 (PGSSSTPSPT) show a composition bias toward low complexity. A compositionally biased stretch (polar residues) spans 56–69 (LSGSDSSPTTNTIE). Low complexity-rich tracts occupy residues 115 to 128 (APSSDPVDSSAPVV) and 161 to 174 (SSASASNQKQAQGS). Positions 175–195 (IVAQTSPGASSVRFSPTTSTQ) are enriched in polar residues. Over residues 212–226 (DSDDDDLDGDADNGD) the composition is skewed to acidic residues. Position 213 is a phosphoserine (Ser213). Positions 229–292 (DVKRARRMLS…DAAAVDNRIL (64 aa)) constitute a bZIP domain. A basic motif region spans residues 231–250 (KRARRMLSNRESARRSRRRK). The short motif at 233–240 (ARRMLSNR) is the Nuclear localization signal element. The tract at residues 264 to 271 (LRAEHSTL) is leucine-zipper. The segment covering 332–345 (NTPSASSSIPPNSN) has biased composition (low complexity). 2 disordered regions span residues 332-361 (NTPSASSSIPPNSNHILKPANSSTNTSAGL) and 380-403 (EGMQNPFAPDSNLYETLPHWNHKH). The segment covering 351–361 (ANSSTNTSAGL) has biased composition (polar residues).

Belongs to the bZIP family. As to quaternary structure, homodimer. Forms a heterodimer with BZIP1, BZIP1, BZIP2, BZIP9, BZIP11, BZIP44, BZIP53 and BZIP63. Interacts with ABI3 and forms a complex made of ABI3, BZIP53 and BZIP25. In terms of tissue distribution, expressed in roots, shoots, stems, leaves, stipulae, siliques, seeds, pollen, and flowers.

It is found in the nucleus. Transcription factor that binds to the 5'-ACGT-3' box, especially present in G-box-like motif (5'-CCACGTGGCC-3'), ABRE elements, of seed storage protein (SSP) encoding gene promoters (e.g. At2S and CRU3) and promotes their expression in seeds when in complex with ABI3 and BZIP53. This Arabidopsis thaliana (Mouse-ear cress) protein is Basic leucine zipper 25 (BZIP25).